An 87-amino-acid polypeptide reads, in one-letter code: Phosphoribosyl-ATP pyrophosphatase (87 aa).

This sequence belongs to the PRA-PH family.

The protein localises to the cytoplasm. The catalysed reaction is 1-(5-phospho-beta-D-ribosyl)-ATP + H2O = 1-(5-phospho-beta-D-ribosyl)-5'-AMP + diphosphate + H(+). It participates in amino-acid biosynthesis; L-histidine biosynthesis; L-histidine from 5-phospho-alpha-D-ribose 1-diphosphate: step 2/9. In Thermobifida fusca (strain YX), this protein is Phosphoribosyl-ATP pyrophosphatase.